A 421-amino-acid chain; its full sequence is MDRAIEHTKYLIAGSSHAALEAINAIRMHDAEGPITVVTRDAHLPYSPTVLPYVVSGKSAPERIFLRDDDFFARNKVAYRPKAALKALHADRNTAELADGSSVVYEKLLLATGASPAIPPIPGIDTVSYHVLRTLDDALKLRGAIAESKQAVVLGAGLVGMHAAENLVKAGATVTIVEMSEQLTSGYFDKVAADMIEQAFRDAGGKIMTGSRVVRLEPTAAGAKLTLENGTTLEADLLLVATGVKPEMDYLNGSGVEHAQGILVDDRMQTTAENVWAAATAQARGFFTGTKVMNAILPDATIQGRVAGMAMAGDPGVKDYAGAVPLNTYHFFGRHAISVGSSTVPEGGEVVTRFDEKTGRYLKAIFAADGPLTGIFGVNEFFDGGVMAQLILRRTDLTPLRSRFVANPLAVGREIMSQTWR.

FAD is bound by residues Ser15–Ala18, Thr39–Arg40, and Ala279–Leu297.

Belongs to the FAD-dependent oxidoreductase family. Dimer of heteropentamers composed of an alpha (PadG), a beta (PadI), a gamma (PadE), a delta (PadF) and an epsilon (PadH) subunit. FAD serves as cofactor.

It catalyses the reaction phenylglyoxylate + NAD(+) + CoA = benzoyl-CoA + CO2 + NADH. With respect to regulation, activated by magnesium ions and thiamine diphosphate. Involved in the anaerobic metabolism of phenylalanine and phenylacetate. Catalyzes the oxidative decarboxylation of phenylglyoxylate to benzoyl-CoA and CO(2). It can also react slowly with 2-oxo-3-methylbutanoate and use different electron acceptors such as benzyl viologen, methyl viologen, FAD or FMN, but NAD seems to be the physiological electron acceptor. Also catalyzes an isotope exchange between CO(2) and the carboxyl group which proves partial or complete reversibility of the oxidative decarboxylation reaction. This is NADH-dependent phenylglyoxylate dehydrogenase subunit epsilon (padH) from Aromatoleum evansii (Azoarcus evansii).